The chain runs to 336 residues: Dihydroorotate dehydrogenase (quinone) (336 aa).

Residues 62–66 and Thr86 each bind FMN; that span reads AGLDK. Lys66 contacts substrate. 111 to 115 is a substrate binding site; it reads NRMGF. Asn139 and Asn172 together coordinate FMN. Asn172 is a substrate binding site. Ser175 (nucleophile) is an active-site residue. Asn177 is a substrate binding site. The FMN site is built by Lys217 and Thr245. 246–247 provides a ligand contact to substrate; that stretch reads NT. Residues Gly268, Gly297, and 318–319 contribute to the FMN site; that span reads FS.

This sequence belongs to the dihydroorotate dehydrogenase family. Type 2 subfamily. Monomer. Requires FMN as cofactor.

The protein resides in the cell membrane. It carries out the reaction (S)-dihydroorotate + a quinone = orotate + a quinol. It functions in the pathway pyrimidine metabolism; UMP biosynthesis via de novo pathway; orotate from (S)-dihydroorotate (quinone route): step 1/1. Catalyzes the conversion of dihydroorotate to orotate with quinone as electron acceptor. This chain is Dihydroorotate dehydrogenase (quinone), found in Photorhabdus laumondii subsp. laumondii (strain DSM 15139 / CIP 105565 / TT01) (Photorhabdus luminescens subsp. laumondii).